A 407-amino-acid chain; its full sequence is Multifunctional CCA protein (407 aa).

ATP-binding residues include glycine 8 and arginine 11. 2 residues coordinate CTP: glycine 8 and arginine 11. Mg(2+) is bound by residues aspartate 21 and aspartate 23. 3 residues coordinate ATP: arginine 91, arginine 137, and arginine 140. CTP is bound by residues arginine 91, arginine 137, and arginine 140. The HD domain maps to 226–327 (TGIHVMAVVD…VKLLERTDAL (102 aa)).

It belongs to the tRNA nucleotidyltransferase/poly(A) polymerase family. Bacterial CCA-adding enzyme type 1 subfamily. As to quaternary structure, monomer. Can also form homodimers and oligomers. It depends on Mg(2+) as a cofactor. Ni(2+) serves as cofactor.

The catalysed reaction is a tRNA precursor + 2 CTP + ATP = a tRNA with a 3' CCA end + 3 diphosphate. It catalyses the reaction a tRNA with a 3' CCA end + 2 CTP + ATP = a tRNA with a 3' CCACCA end + 3 diphosphate. Its function is as follows. Catalyzes the addition and repair of the essential 3'-terminal CCA sequence in tRNAs without using a nucleic acid template. Adds these three nucleotides in the order of C, C, and A to the tRNA nucleotide-73, using CTP and ATP as substrates and producing inorganic pyrophosphate. tRNA 3'-terminal CCA addition is required both for tRNA processing and repair. Also involved in tRNA surveillance by mediating tandem CCA addition to generate a CCACCA at the 3' terminus of unstable tRNAs. While stable tRNAs receive only 3'-terminal CCA, unstable tRNAs are marked with CCACCA and rapidly degraded. This is Multifunctional CCA protein from Aromatoleum aromaticum (strain DSM 19018 / LMG 30748 / EbN1) (Azoarcus sp. (strain EbN1)).